Consider the following 395-residue polypeptide: Octopamine receptor beta-2R (395 aa).

Residues 1–42 (MDPINGSHSGANATISDITNGAYNATDAGEWTSSVMFKLRTC) lie on the Extracellular side of the membrane. N-linked (GlcNAc...) asparagine glycans are attached at residues asparagine 5, asparagine 12, and asparagine 24. A helical membrane pass occupies residues 43 to 63 (VLLLIVIMAVLGNMLVIVSVM). The Cytoplasmic segment spans residues 64–74 (RHRKLRVITNY). The helical transmembrane segment at 75-95 (FVVSLAFADILVAMVVMPFNF) threads the bilayer. Over 96 to 117 (SVQFNQGWVFGETICDLWNSSD) the chain is Extracellular. Asparagine 114 carries an N-linked (GlcNAc...) asparagine glycan. A helical membrane pass occupies residues 118–140 (VYFTSTSILHLCCISVDRYYAIV). Residues 141 to 154 (KPLKYPIKMTKKMA) lie on the Cytoplasmic side of the membrane. Residues 155-175 (FVMLAATWLSPITISYVPIFM) traverse the membrane as a helical segment. Topologically, residues 176–202 (GWYTTTDFLESRRDDQCEFKVNKPYAV) are extracellular. A helical transmembrane segment spans residues 203–223 (ISSSISFWIPCTIMIFTYLAI). Topologically, residues 224–282 (FKEANRQEKALHARAGNAMLMHRHSREVSDKNGALHINATTPTKDRNLLKMKREHKAAR) are cytoplasmic. A helical transmembrane segment spans residues 283 to 303 (TLGIIMGAFILCWLPFFLYYV). Over 304-315 (STSLCDSCNCPE) the chain is Extracellular. Residues 316–336 (VVTVIMFWTGYFNSALNPIIY) form a helical membrane-spanning segment. At 337-395 (AYFNRDFRNAFKNTLACAFCSFCKRSASDLDAMERLDRRGSAQLRVPIPSRRASDLASL) the chain is on the cytoplasmic side.

This sequence belongs to the G-protein coupled receptor 1 family.

Its subcellular location is the cell membrane. Autoreceptor for octopamine, which is a neurotransmitter, neurohormone, and neuromodulator in invertebrates. Also acts as a receptor for tyramine, but with much less potency. The activity of this receptor is mediated by G proteins which activate adenylyl cyclase. In Chilo suppressalis (Asiatic rice borer moth), this protein is Octopamine receptor beta-2R.